We begin with the raw amino-acid sequence, 274 residues long: NADPH-dependent 7-cyano-7-deazaguanine reductase (274 aa).

81–83 provides a ligand contact to substrate; that stretch reads IES. An NADPH-binding site is contributed by 83–84; sequence SK. Cys-182 (thioimide intermediate) is an active-site residue. The active-site Proton donor is the Asp-189. 221–222 is a binding site for substrate; it reads HE. 250–251 provides a ligand contact to NADPH; it reads RG.

This sequence belongs to the GTP cyclohydrolase I family. QueF type 2 subfamily. Homodimer.

Its subcellular location is the cytoplasm. The catalysed reaction is 7-aminomethyl-7-carbaguanine + 2 NADP(+) = 7-cyano-7-deazaguanine + 2 NADPH + 3 H(+). The protein operates within tRNA modification; tRNA-queuosine biosynthesis. Catalyzes the NADPH-dependent reduction of 7-cyano-7-deazaguanine (preQ0) to 7-aminomethyl-7-deazaguanine (preQ1). This Hahella chejuensis (strain KCTC 2396) protein is NADPH-dependent 7-cyano-7-deazaguanine reductase.